The primary structure comprises 88 residues: Alpha-conotoxin GVIIIB (88 aa).

Residues 1–20 form the signal peptide; that stretch reads MMSKMGAMFVLLLLFTLASS. Positions 21–43 are excised as a propeptide; the sequence is QQEGDVQARKTRPKSDFYRALPR. Thr87 carries the post-translational modification Threonine amide.

The protein belongs to the conotoxin S superfamily. In terms of processing, contains 5 disulfide bonds. Post-translationally, the predominant peptide contains 2 hydroxyprolines, while 2 minor peptides contains 1 and 3 hydroxyprolines. As to expression, expressed by the venom duct.

It is found in the secreted. In terms of biological role, alpha-conotoxins act on postsynaptic membranes, they bind to the nicotinic acetylcholine receptors (nAChR) and thus inhibit them. This toxin shows high activity on alpha-9-alpha-10 (CHRNA9-CHRNA10) (IC(50)=9.79 nM). It also shows weak activity on alpha-3-beta-2 (CHRNA3-CHRNB2) (IC(50)~1 uM), alpha-6/alpha-3-beta-2-beta-3 (CHRNA6/CHRNA3-CHRNB2-CHRNB3) (IC(50)~1 uM). The toxin binds to the same or overlapping binding sites than conotoxin RgIA (AC P0C1D0). This Conus geographus (Geography cone) protein is Alpha-conotoxin GVIIIB.